Here is a 458-residue protein sequence, read N- to C-terminus: Cytoplasmic tRNA 2-thiolation protein 2 (458 aa).

It belongs to the CTU2/NCS2 family.

It localises to the cytoplasm. Its pathway is tRNA modification; 5-methoxycarbonylmethyl-2-thiouridine-tRNA biosynthesis. Plays a central role in 2-thiolation of mcm(5)S(2)U at tRNA wobble positions of tRNA(Lys), tRNA(Glu) and tRNA(Gln). May act by forming a heterodimer with NCS6/CTU1 that ligates sulfur from thiocarboxylated URM1 onto the uridine of tRNAs at wobble position. The chain is Cytoplasmic tRNA 2-thiolation protein 2 from Arabidopsis thaliana (Mouse-ear cress).